The primary structure comprises 178 residues: Large ribosomal subunit protein bL25 (178 aa).

This sequence belongs to the bacterial ribosomal protein bL25 family. CTC subfamily. Part of the 50S ribosomal subunit; part of the 5S rRNA/L5/L18/L25 subcomplex. Contacts the 5S rRNA. Binds to the 5S rRNA independently of L5 and L18.

In terms of biological role, this is one of the proteins that binds to the 5S RNA in the ribosome where it forms part of the central protuberance. The protein is Large ribosomal subunit protein bL25 of Helicobacter pylori (strain J99 / ATCC 700824) (Campylobacter pylori J99).